The primary structure comprises 1179 residues: Stress response protein NST1 (1179 aa).

7 disordered regions span residues 1–64 (MSET…LNDP), 147–189 (TVNT…SNSS), 255–351 (KRQQ…NHSH), 537–619 (AAWI…EEEK), 660–819 (EAEE…DISQ), 928–947 (SSQA…PQLS), and 957–997 (SLSQ…VWNP). Residues 10–22 (DVSKFKNGDDVHF) are compositionally biased toward basic and acidic residues. A compositionally biased stretch (polar residues) spans 24–38 (YNSTTNDQTINSTNV). The segment covering 39–53 (QKKKKKKKSKNKHKG) has biased composition (basic residues). Residues 149–178 (NTSNNHQNNSNTQGGSTSTSGGALNGSSTN) show a composition bias toward low complexity. Residues 262-278 (YKQERDAHHDHHNHEPG) are compositionally biased toward basic and acidic residues. A compositionally biased stretch (low complexity) spans 282–299 (SDTGSSGDYDGSTQQDQQ). Residues 300-347 (HQYEHEIEHAFQEDEHEDECGHKNDHSHSHSHSHTENHNHSHSYDPNH) are compositionally biased toward basic and acidic residues. The span at 564–616 (ELEEELNDEYDEVDEDDDEGEEEGEEEEEELDDEEFEEDEEEDASDTESEISE) shows a compositional bias: acidic residues. Positions 648-810 (SQDRTRTLIE…KSAKKQDHKE (163 aa)) form a coiled coil. 2 stretches are compositionally biased toward basic and acidic residues: residues 663 to 681 (ENAK…EKAK) and 690 to 812 (AKEE…KETG). Residues 957–977 (SLSQNSLSSNANENLNTNPLN) are compositionally biased toward low complexity.

It belongs to the NST1 family.

It localises to the cytoplasm. Its function is as follows. May act as a negative regulator of salt tolerance. This is Stress response protein NST1 (NST1) from Debaryomyces hansenii (strain ATCC 36239 / CBS 767 / BCRC 21394 / JCM 1990 / NBRC 0083 / IGC 2968) (Yeast).